The following is a 347-amino-acid chain: CRISPR-associated endonuclease Cas1 4 (347 aa).

Basic and acidic residues predominate over residues Met1–Pro21. A disordered region spans residues Met1–Leu25. Mn(2+)-binding residues include Glu176, His241, and Glu256.

This sequence belongs to the CRISPR-associated endonuclease Cas1 family. As to quaternary structure, homodimer, forms a heterotetramer with a Cas2 homodimer. Mg(2+) serves as cofactor. The cofactor is Mn(2+).

Its function is as follows. CRISPR (clustered regularly interspaced short palindromic repeat), is an adaptive immune system that provides protection against mobile genetic elements (viruses, transposable elements and conjugative plasmids). CRISPR clusters contain spacers, sequences complementary to antecedent mobile elements, and target invading nucleic acids. CRISPR clusters are transcribed and processed into CRISPR RNA (crRNA). Acts as a dsDNA endonuclease. Involved in the integration of spacer DNA into the CRISPR cassette. The polypeptide is CRISPR-associated endonuclease Cas1 4 (Methanospirillum hungatei JF-1 (strain ATCC 27890 / DSM 864 / NBRC 100397 / JF-1)).